Here is a 489-residue protein sequence, read N- to C-terminus: Rhamnulokinase (489 aa).

13-17 (ASSGR) is an ATP binding site. Residues C68 and C222 are joined by a disulfide bond. Substrate-binding positions include G83 and 236–238 (HDT). The Proton acceptor role is filled by D237. T259 is an ATP binding site. Substrate is bound at residue N296. Residue Q304 coordinates ATP. Residues C353 and C370 are joined by a disulfide bond. G402 contacts ATP. C413 and C417 are disulfide-bonded.

Belongs to the rhamnulokinase family. The cofactor is Mg(2+).

The enzyme catalyses L-rhamnulose + ATP = L-rhamnulose 1-phosphate + ADP + H(+). Its pathway is carbohydrate degradation; L-rhamnose degradation; glycerone phosphate from L-rhamnose: step 2/3. In terms of biological role, involved in the catabolism of L-rhamnose (6-deoxy-L-mannose). Catalyzes the transfer of the gamma-phosphate group from ATP to the 1-hydroxyl group of L-rhamnulose to yield L-rhamnulose 1-phosphate. This Shigella sonnei (strain Ss046) protein is Rhamnulokinase.